The sequence spans 858 residues: Polyhomeotic-like protein 2 (858 aa).

Disordered regions lie at residues 1-76, 230-307, 337-388, 407-444, 473-493, and 529-561; these read MENE…QYLQ, QQTP…MEGR, PQPS…VALQ, LQCP…PHTP, KEVA…SPHQ, and TDLS…KPPQ. Low complexity-rich tracts occupy residues 10-34 and 230-241; these read TSSS…NSSS and QQTPAAAASGPT. An interaction with BMI1 region spans residues 33-53; the sequence is SSGGSGRPTGPQISVYSGIPD. Residues 265–274 show a composition bias toward polar residues; the sequence is PAQSRNTAQA. A compositionally biased stretch (low complexity) spans 337 to 358; that stretch reads PQPSSKHLQPQFVIQQQPQPQQ. Polar residues predominate over residues 379–388; that stretch reads ASVSPSVALQ. The segment covering 473–483 has biased composition (basic and acidic residues); that stretch reads KEVAPGEKSVP. Positions 537-551 are enriched in low complexity; sequence TSGNGNSASSIAGTA. The HD1 motif lies at 558–587; sequence KPPQAIVKPQILTHVIEGFVIQEGAEPFPV. Residues lysine 598 and lysine 600 each participate in a glycyl lysine isopeptide (Lys-Gly) (interchain with G-Cter in SUMO2) cross-link. Threonine 619 carries the phosphothreonine modification. Serine 621 is subject to Phosphoserine. Residue lysine 632 forms a Glycyl lysine isopeptide (Lys-Gly) (interchain with G-Cter in SUMO2) linkage. The FCS-type zinc-finger motif lies at 633–667; that stretch reads EEGAPLKLKCELCGRVDFAYKFKRSKRFCSMACAK. Zn(2+) is bound by residues cysteine 642, cysteine 645, cysteine 661, and cysteine 665. Disordered stretches follow at residues 688 to 720 and 732 to 768; these read QKAG…TGTV and HSQE…GQRD. Lysine 702 participates in a covalent cross-link: Glycyl lysine isopeptide (Lys-Gly) (interchain with G-Cter in SUMO2). At serine 751 the chain carries Phosphoserine. The SAM domain maps to 794–858; that stretch reads WNVEDVYEFI…YARISMLKDS (65 aa). Lysine 847 is covalently cross-linked (Glycyl lysine isopeptide (Lys-Gly) (interchain with G-Cter in SUMO2)).

As to quaternary structure, component of a PRC1-like complex. Interacts with CBX4. Interacts with BMI1, PCGF2, PHC1 and RNF2. Interacts with CHTOP. Interacts with the N-terminal region of the SP1 transcription factor and with MAPKAPK2. Interacts with SAMD7 and SAMD11.

The protein resides in the nucleus. Component of a Polycomb group (PcG) multiprotein PRC1-like complex, a complex class required to maintain the transcriptionally repressive state of many genes, including Hox genes, throughout development. PcG PRC1 complex acts via chromatin remodeling and modification of histones; it mediates monoubiquitination of histone H2A 'Lys-119', rendering chromatin heritably changed in its expressibility. This chain is Polyhomeotic-like protein 2 (PHC2), found in Homo sapiens (Human).